The following is a 152-amino-acid chain: Xanthine-guanine phosphoribosyltransferase (152 aa).

Residues 37-38 and 88-96 contribute to the 5-phospho-alpha-D-ribose 1-diphosphate site; these read RG and DDLVDTGNT. A Mg(2+)-binding site is contributed by aspartate 89. Residues aspartate 92 and isoleucine 135 each coordinate guanine. Xanthine is bound by residues aspartate 92 and isoleucine 135. GMP contacts are provided by residues 92–96 and 134–135; these read DTGNT and WI.

Belongs to the purine/pyrimidine phosphoribosyltransferase family. XGPT subfamily. In terms of assembly, homotetramer. Mg(2+) is required as a cofactor.

The protein resides in the cell inner membrane. The enzyme catalyses GMP + diphosphate = guanine + 5-phospho-alpha-D-ribose 1-diphosphate. It carries out the reaction XMP + diphosphate = xanthine + 5-phospho-alpha-D-ribose 1-diphosphate. It catalyses the reaction IMP + diphosphate = hypoxanthine + 5-phospho-alpha-D-ribose 1-diphosphate. Its pathway is purine metabolism; GMP biosynthesis via salvage pathway; GMP from guanine: step 1/1. It functions in the pathway purine metabolism; XMP biosynthesis via salvage pathway; XMP from xanthine: step 1/1. Functionally, purine salvage pathway enzyme that catalyzes the transfer of the ribosyl-5-phosphate group from 5-phospho-alpha-D-ribose 1-diphosphate (PRPP) to the N9 position of the 6-oxopurines guanine and xanthine to form the corresponding ribonucleotides GMP (guanosine 5'-monophosphate) and XMP (xanthosine 5'-monophosphate), with the release of PPi. To a lesser extent, also acts on hypoxanthine. The protein is Xanthine-guanine phosphoribosyltransferase of Mannheimia succiniciproducens (strain KCTC 0769BP / MBEL55E).